Reading from the N-terminus, the 252-residue chain is Glycine-rich cell wall structural protein 1.0 (252 aa).

An N-terminal signal peptide occupies residues 1–30 (MATSKVLLSNVLFVFVCFGICSAARTLLTL). Residues 231–252 (GSGYGGGGGSGEGGGHGGGYYP) are disordered.

As to expression, expressed in young hypocotyls.

It is found in the secreted. Its subcellular location is the cell wall. Its function is as follows. Responsible for plasticity of the cell wall. This is Glycine-rich cell wall structural protein 1.0 from Phaseolus vulgaris (Kidney bean).